The following is a 170-amino-acid chain: Large ribosomal subunit protein uL11 (170 aa).

Belongs to the universal ribosomal protein uL11 family. Part of the ribosomal stalk of the 50S ribosomal subunit. Interacts with L10 and the large rRNA to form the base of the stalk. L10 forms an elongated spine to which L12 dimers bind in a sequential fashion forming a multimeric L10(L12)X complex.

Its function is as follows. Forms part of the ribosomal stalk which helps the ribosome interact with GTP-bound translation factors. This chain is Large ribosomal subunit protein uL11, found in Saccharolobus islandicus (strain M.14.25 / Kamchatka #1) (Sulfolobus islandicus).